Consider the following 80-residue polypeptide: MRLQLILTITLLLTSFMGYRDAAVIQGKTERSAMKMRKLLQILHKNSCGCNDDDSDGDDCCFGTCLDNACWPVKKRSSAI.

An N-terminal signal peptide occupies residues methionine 1–alanine 22. A propeptide spanning residues alanine 23–methionine 36 is cleaved from the precursor. 3 disulfide bridges follow: cysteine 48-cysteine 61, cysteine 50-cysteine 65, and cysteine 60-cysteine 70. Residues serine 77–isoleucine 80 constitute a propeptide that is removed on maturation.

In terms of tissue distribution, expressed by the venom duct.

It is found in the secreted. The polypeptide is Turripeptide VI/VII-01 (Gemmula speciosa (Splendid gem-turris)).